Consider the following 986-residue polypeptide: Rho guanine nucleotide exchange factor 2 (986 aa).

A Phorbol-ester/DAG-type zinc finger spans residues 39–86 (GHLFTTISVSGMTMCYACNKSITAKEALICPTCNVTIHNRCKDTLANC). A phosphoserine mark is found at serine 109, serine 122, serine 129, serine 133, and serine 137. Positions 131–161 (RQSLLGSRRGRSSLSLAKSVSTTNIAGHFND) are interaction with DYNLT1. A Phosphoserine; by PAK4 modification is found at serine 143. Serine 151, serine 163, serine 172, serine 174, and serine 177 each carry phosphoserine. One can recognise a DH domain in the interval 235–432 (KQQDVIYELI…KELLSNVDEG (198 aa)). Lysine 353 bears the N6-acetyllysine mark. The PH domain occupies 472–571 (KLIHDGCLLW…WIRVIQQSVR (100 aa)). A coiled-coil region spans residues 587–611 (EAYLRRIKMELQQKDRALVELLREK). Phosphoserine occurs at positions 645 and 648. Threonine 679 is subject to Phosphothreonine; by MAPK1 or MAPK3. The tract at residues 683 to 705 (PALPLEPDSGGNTSPGVTANGEA) is disordered. Residues serine 691, serine 696, serine 711, and serine 782 each carry the phosphoserine modification. Positions 798-867 (EKQATELALL…RQLAALGQTE (70 aa)) form a coiled coil. Positions 862–986 (ALGQTEPLPA…RDGEAVASES (125 aa)) are disordered. Residue serine 886 is modified to Phosphoserine; by PAK1 and AURKA. The residue at position 894 (tyrosine 894) is a Phosphotyrosine. Phosphoserine; by PAK4 is present on serine 896. Residues 920-939 (RNFEDRERQELGSPEERLQD) show a composition bias toward basic and acidic residues. Phosphoserine occurs at positions 932, 940, and 941. Residues 941 to 950 (SDPDTGSEEE) are compositionally biased toward acidic residues. A Phosphothreonine modification is found at threonine 945. Phosphoserine is present on residues serine 947, serine 952, serine 953, serine 956, and serine 960.

In terms of assembly, found in a complex composed at least of ARHGEF2, NOD2 and RIPK2. Interacts with RIPK2; the interaction mediates tyrosine phosphorylation of RIPK2 by Src kinase CSK. Interacts with RIPK1 and RIPK3. Interacts with YWHAZ/14-3-3 zeta; when phosphorylated at Ser-886. Interacts with the kinases PAK4, AURKA and MAPK1. Interacts with RHOA and RAC1. Interacts with NOD1. Interacts (via the N-terminal zinc finger) with CAPN6 (via domain II). Interacts with DYNLT1. In terms of processing, phosphorylation of Ser-886 by PAK1 induces binding to protein YWHAZ, promoting its relocation to microtubules and the inhibition of its activity. Phosphorylated by AURKA and CDK1 during mitosis, which negatively regulates its activity. Phosphorylation by MAPK1 or MAPK3 increases nucleotide exchange activity. Phosphorylation by PAK4 releases GEF-H1 from the microtubules. Phosphorylated on serine, threonine and tyrosine residues in a RIPK2-dependent manner.

It is found in the cytoplasm. The protein resides in the cytoskeleton. Its subcellular location is the cell junction. The protein localises to the tight junction. It localises to the golgi apparatus. It is found in the spindle. The protein resides in the cell projection. Its subcellular location is the ruffle membrane. The protein localises to the cytoplasmic vesicle. Its function is as follows. Activates Rho-GTPases by promoting the exchange of GDP for GTP. May be involved in epithelial barrier permeability, cell motility and polarization, dendritic spine morphology, antigen presentation, leukemic cell differentiation, cell cycle regulation, innate immune response, and cancer. Binds Rac-GTPases, but does not seem to promote nucleotide exchange activity toward Rac-GTPases, which was uniquely reported in PubMed:9857026. May stimulate instead the cortical activity of Rac. Inactive toward CDC42, TC10, or Ras-GTPases. Forms an intracellular sensing system along with NOD1 for the detection of microbial effectors during cell invasion by pathogens. Required for RHOA and RIP2 dependent NF-kappaB signaling pathways activation upon S.flexneri cell invasion. Involved not only in sensing peptidoglycan (PGN)-derived muropeptides through NOD1 that is independent of its GEF activity, but also in the activation of NF-kappaB by Shigella effector proteins (IpgB2 and OspB) which requires its GEF activity and the activation of RhoA. Involved in innate immune signaling transduction pathway promoting cytokine IL6/interleukin-6 and TNF-alpha secretion in macrophage upon stimulation by bacterial peptidoglycans; acts as a signaling intermediate between NOD2 receptor and RIPK2 kinase. Contributes to the tyrosine phosphorylation of RIPK2 through Src tyrosine kinase leading to NF-kappaB activation by NOD2. Overexpression activates Rho-, but not Rac-GTPases, and increases paracellular permeability. Involved in neuronal progenitor cell division and differentiation. Involved in the migration of precerebellar neurons. This chain is Rho guanine nucleotide exchange factor 2 (ARHGEF2), found in Homo sapiens (Human).